Reading from the N-terminus, the 475-residue chain is Divinyl ether synthase CYP74M1 (475 aa).

Cys-427 is a binding site for heme.

This sequence belongs to the cytochrome P450 family. The cofactor is heme.

It catalyses the reaction (13S)-hydroperoxy-(9Z,11E)-octadecadienoate = etheroleate + H2O. The catalysed reaction is (13S)-hydroperoxy-(9Z,11E,15Z)-octadecatrienoate = etherolenate + H2O. Its pathway is lipid metabolism; oxylipin biosynthesis. Divinyl ether synthase involved in oxylipin biosynthesis. Catalyzes the conversion of (13S)-hydroperoxy-(9Z,11E)-octadecadienoate (13-HPOD) to etheroleate and (13S)-hydroperoxy-(9Z,11E,15Z)-octadecatrienoate (13-HPOT) to etherolenate. Has no activity with the corresponding 9-hydroperoxides (9-HPOD and 9-HPOT). This Selaginella moellendorffii (Spikemoss) protein is Divinyl ether synthase CYP74M1.